A 76-amino-acid polypeptide reads, in one-letter code: Large ribosomal subunit protein bL28 (76 aa).

The disordered stretch occupies residues 21-42 (RGKAKKEGGVGKHITKTSRRRQ). The segment covering 33–42 (HITKTSRRRQ) has biased composition (basic residues).

Belongs to the bacterial ribosomal protein bL28 family.

The protein is Large ribosomal subunit protein bL28 of Halothermothrix orenii (strain H 168 / OCM 544 / DSM 9562).